Reading from the N-terminus, the 489-residue chain is Rhamnulokinase (489 aa).

13–17 provides a ligand contact to ATP; the sequence is ASSGR. A disulfide bridge links C68 with C222. Residues G83 and 236–238 contribute to the substrate site; that span reads HDT. The active-site Proton acceptor is D237. T259 provides a ligand contact to ATP. N296 lines the substrate pocket. Q304 serves as a coordination point for ATP. C353 and C370 form a disulfide bridge. G402 lines the ATP pocket. Residues C413 and C417 are joined by a disulfide bond.

The protein belongs to the rhamnulokinase family. In terms of assembly, monomer. Mg(2+) is required as a cofactor.

The enzyme catalyses L-rhamnulose + ATP = L-rhamnulose 1-phosphate + ADP + H(+). It functions in the pathway carbohydrate degradation; L-rhamnose degradation; glycerone phosphate from L-rhamnose: step 2/3. Functionally, involved in the catabolism of L-rhamnose (6-deoxy-L-mannose). Catalyzes the transfer of the gamma-phosphate group from ATP to the 1-hydroxyl group of L-rhamnulose to yield L-rhamnulose 1-phosphate. The polypeptide is Rhamnulokinase (Escherichia coli O9:H4 (strain HS)).